Here is a 343-residue protein sequence, read N- to C-terminus: MASEGVLLGMGNPLLDISCVVDDAFLEKYGLTLNNAILAEDKHLPMYKELAANPDVEYIAGGATQNTIRIAQWMLGESNATSYFGCVGKDEYGDRMFKLASEGGVNIRYDVDEDLPTGTCGVLVVKGERSLVANLSAANKYKIDHLKKPENWAFVEKAKYIYSAGFFLTVSPESMMTVAKHAAETGKYYMINLAAPFICQFFKDPLMELFPYVDFIFGNESEARAFAQVQGWETEDTKVIAVKLAALPKAGGTHKRVAVITQGTDPTIVAEDGKVTEFPVTPIPKEKLVDTNAAGDSFVGGFLSQLVLGKDIAQCVRAGNYAASVIIQRSGCTFPSKPSFESQ.

Asp296 is a catalytic residue.

This sequence belongs to the carbohydrate kinase PfkB family. Mg(2+) serves as cofactor.

The catalysed reaction is adenosine + ATP = AMP + ADP + H(+). The protein operates within purine metabolism; AMP biosynthesis via salvage pathway; AMP from adenosine: step 1/1. Its function is as follows. ATP dependent phosphorylation of adenosine and other related nucleoside analogs to monophosphate derivatives. Can also act on the cytokinin isopentenyladenosine to produce isopentenyladenosine monophosphate. In Physcomitrium patens (Spreading-leaved earth moss), this protein is Adenosine kinase (ADK).